Consider the following 239-residue polypeptide: MAQVSMRDMLQAGVHFGHQTRYWNPKMKPFIFGPRNGVHIINLEKTVPMFNEALVELTRIASNNGRILFVGTKRAASEVVKAAALDCQQYYVNHRWLGGMLTNWKTVRQSIKRLKDLETQSQDGTFDKLTKKEALVRTREMEKLELSLGGIKDMGGLPDAIFVIGADHEHIAIKEANNLGIPVFAIVDTNSSPDGVDFVIPGNDDASRAIQLYLSAATTAVKEGRNQETVTEEVFAAAE.

The protein belongs to the universal ribosomal protein uS2 family.

The protein is Small ribosomal subunit protein uS2 of Histophilus somni (strain 129Pt) (Haemophilus somnus).